Consider the following 1520-residue polypeptide: Myosin-5 (1520 aa).

The 50-residue stretch at 7–56 (IVGSHVWVEDPHLAWIDGEVTRIDGINVHVKTKKGKTVVTNVYFPKDTEA) folds into the Myosin N-terminal SH3-like domain. Residues 59–729 (GGVDDMTKLS…QMAELDARRA (671 aa)) enclose the Myosin motor domain. ATP is bound by residues 153–160 (GESGAGKT) and 206–214 (NNNSSRFGK). 4 actin-binding regions span residues 492–526 (LIEKKPGGIISLLDEACMFPKSTHETFSQKLFQTF), 528–551 (EHERFAKPKLSRTDFTISHYAGEV), 586–610 (FHALHEDSSRSSKFSSIGSRFKQQL), and 610–632 (LHSLMESLNGTEPHYIRCIKPNN). IQ domains follow at residues 732–761 (LGNAARVIQRQFRTCMARKNYRSIRNAAIV), 755–784 (IRNAAIVLQSFLRGEIARAVHKKLRIEAAA), 780–809 (IEAAALRVQKNFRRYVDRKSFVTTRSSTIV), 803–832 (TRSSTIVLQTGLRAMIARSEFRLRRQRKAA), 828–857 (QRKAAIVLQAHWRGRQAFSYYTRLQKAAIV), and 851–880 (LQKAAIVTQCAWRCRLARRELRMLKMAARD). A coiled-coil region spans residues 881–1047 (TGALKDAKNK…ESENKVLRQQ (167 aa)). Residues 1062–1100 (PKTTIIQRTPEKDTFSNGETTQLQEPETEDRPQKSLNQK) form a disordered region. Residues 1076-1086 (FSNGETTQLQE) are compositionally biased toward polar residues. One can recognise a Dilute domain in the interval 1148–1463 (NRIIETIASA…IATMRAEVSD (316 aa)).

The protein belongs to the TRAFAC class myosin-kinesin ATPase superfamily. Myosin family. Plant myosin class XI subfamily. As to quaternary structure, homodimer. Interacts with MYOB1 and MYOB2. Interacts with PHOX1.

Its subcellular location is the cytoplasm. Its function is as follows. Myosin heavy chain that is required for the cell cycle-regulated transport of various organelles and proteins for their segregation. Functions by binding with its tail domain to receptor proteins on organelles and exerting force with its N-terminal motor domain against actin filaments, thereby transporting its cargo along polarized actin cables. Contributes to the trafficking of Golgi stacks, mitochondria and peroxisomes. Required for development of pavement cells, trichomes, and stigmatic papillae. The protein is Myosin-5 (XI-1) of Arabidopsis thaliana (Mouse-ear cress).